Here is a 337-residue protein sequence, read N- to C-terminus: DNA-directed RNA polymerase subunit alpha (337 aa).

The segment at 1 to 233 (MVREEVAVST…DLFIPFLHAE (233 aa)) is alpha N-terminal domain (alpha-NTD). The alpha C-terminal domain (alpha-CTD) stretch occupies residues 266–337 (GIALKCIFID…FTIDLPKNKF (72 aa)).

Belongs to the RNA polymerase alpha chain family. As to quaternary structure, in plastids the minimal PEP RNA polymerase catalytic core is composed of four subunits: alpha, beta, beta', and beta''. When a (nuclear-encoded) sigma factor is associated with the core the holoenzyme is formed, which can initiate transcription.

The protein resides in the plastid. It localises to the chloroplast. The catalysed reaction is RNA(n) + a ribonucleoside 5'-triphosphate = RNA(n+1) + diphosphate. Its function is as follows. DNA-dependent RNA polymerase catalyzes the transcription of DNA into RNA using the four ribonucleoside triphosphates as substrates. This chain is DNA-directed RNA polymerase subunit alpha, found in Liriodendron tulipifera (Tuliptree).